The chain runs to 365 residues: Mannitol dehydrogenase (365 aa).

Residues Cys-50, His-72, Cys-103, Cys-106, Cys-109, Cys-117, and Cys-166 each coordinate Zn(2+).

This sequence belongs to the zinc-containing alcohol dehydrogenase family. Zn(2+) is required as a cofactor.

It localises to the cytoplasm. The enzyme catalyses D-mannitol + NAD(+) = D-mannose + NADH + H(+). Oxidizes mannitol to mannose. Provides the initial step by which translocated mannitol is committed to central metabolism and, by regulating mannitol pool size, is important in regulating salt tolerance at the cellular level. The protein is Mannitol dehydrogenase (MTD) of Apium graveolens (Celery).